A 203-amino-acid polypeptide reads, in one-letter code: Glycerol-3-phosphate acyltransferase (203 aa).

Transmembrane regions (helical) follow at residues 4–24 (IAPGMIFLAYLCGSISSAILV), 56–76 (VAVLVFDVLKGMLPVWGAYML), 80–100 (PFWLGLIAIAACVGHIWPVFF), 112–132 (FGAIAPIGWDLTGVMAGTWLL), and 138–158 (GYSSLGAIVSALIAPFYVWWF).

Belongs to the PlsY family. As to quaternary structure, probably interacts with PlsX.

It localises to the cell inner membrane. It catalyses the reaction an acyl phosphate + sn-glycerol 3-phosphate = a 1-acyl-sn-glycero-3-phosphate + phosphate. It participates in lipid metabolism; phospholipid metabolism. Functionally, catalyzes the transfer of an acyl group from acyl-phosphate (acyl-PO(4)) to glycerol-3-phosphate (G3P) to form lysophosphatidic acid (LPA). This enzyme utilizes acyl-phosphate as fatty acyl donor, but not acyl-CoA or acyl-ACP. This is Glycerol-3-phosphate acyltransferase from Enterobacter sp. (strain 638).